Reading from the N-terminus, the 468-residue chain is MVDTESPICPLSPLEADDLESPLSEEFLQEMGNIQEISQSLGEESSGSFSFADYQYLGSCPGSEGSVITDTLSPASSPSSVSCPAVPTSTDESPGNALNIECRICGDKASGYHYGVHACEGCKGFFRRTIRLKLAYDKCDRSCKIQKKNRNKCQYCRFHKCLSVGMSHNAIRFGRMPRSEKAKLKAEILTCEHDLKDSETADLKSLAKRIHEAYLKNFNMNKVKARVILAGKTSNNPPFVIHDMETLCMAEKTLVAKMVANGVENKEAEVRFFHCCQCMSVETVTELTEFAKAIPGFANLDLNDQVTLLKYGVYEAIFTMLSSLMNKDGMLIAYGNGFITREFLKNLRKPFCDIMEPKFDFAMKFNALELDDSDISLFVAAIICCGDRPGLLNIGYIEKLQEGIVHVLKLHLQSNHPDDTFLFPKLLQKMVDLRQLVTEHAQLVQVIKKTESDAALHPLLQEIYRDMY.

Residues asparagine 99–phenylalanine 173 constitute a DNA-binding region (nuclear receptor). 2 consecutive NR C4-type zinc fingers follow at residues cysteine 102–cysteine 122 and cysteine 139–cysteine 161. In terms of domain architecture, NR LBD spans phenylalanine 239–aspartate 466. The interval aspartate 304 to leucine 433 is required for heterodimerization with RXRA.

Belongs to the nuclear hormone receptor family. NR1 subfamily. In terms of assembly, heterodimer; with RXRA. This heterodimerization is required for DNA binding and transactivation activity. Interacts with NCOA3 coactivator. Interacts with CITED2; the interaction stimulates its transcriptional activity. Also interacts with PPARBP in vitro. Interacts with AKAP13, LPIN1, PRDM16 and coactivator NCOA6. Interacts with ASXL1 and ASXL2. Interacts with PER2. Interacts with SIRT1; the interaction seems to be modulated by NAD(+) levels. Interacts with CRY1 and CRY2. In hepatocytes, interacts with PAQR3 and HUWE1; the interactions promote PPARA poylubiquitination and HUWE1-mediated degradation. Phosphorylated. Post-translationally, ubiquitinated by E3 ubiquitin-protein ligase HUWE1; leading to proteasomal degradation. As to expression, expressed predominantly in liver and kidney.

The protein resides in the nucleus. Its function is as follows. Ligand-activated transcription factor. Key regulator of lipid metabolism. Activated by the endogenous ligand 1-palmitoyl-2-oleoyl-sn-glycerol-3-phosphocholine (16:0/18:1-GPC). Activated by oleylethanolamide, a naturally occurring lipid that regulates satiety. Receptor for peroxisome proliferators such as hypolipidemic drugs and fatty acids. Regulates the peroxisomal beta-oxidation pathway of fatty acids. Functions as a transcription activator for the ACOX1 and P450 genes. Transactivation activity requires heterodimerization with RXRA and is antagonized by NR2C2. May be required for the propagation of clock information to metabolic pathways regulated by PER2. The polypeptide is Peroxisome proliferator-activated receptor alpha (Ppara) (Rattus norvegicus (Rat)).